The sequence spans 181 residues: Bifunctional protein PyrR (181 aa).

The PRPP-binding motif lies at 101–113; it reads VIVVDDVLYTGRT.

Belongs to the purine/pyrimidine phosphoribosyltransferase family. PyrR subfamily. As to quaternary structure, homodimer and homohexamer; in equilibrium.

The enzyme catalyses UMP + diphosphate = 5-phospho-alpha-D-ribose 1-diphosphate + uracil. Its function is as follows. Regulates transcriptional attenuation of the pyrimidine nucleotide (pyr) operon by binding in a uridine-dependent manner to specific sites on pyr mRNA. This disrupts an antiterminator hairpin in the RNA and favors formation of a downstream transcription terminator, leading to a reduced expression of downstream genes. Also displays a weak uracil phosphoribosyltransferase activity which is not physiologically significant. This Bacillus velezensis (strain DSM 23117 / BGSC 10A6 / LMG 26770 / FZB42) (Bacillus amyloliquefaciens subsp. plantarum) protein is Bifunctional protein PyrR.